The sequence spans 452 residues: DNA primase DnaG (452 aa).

In terms of domain architecture, Toprim spans 172-248 (DTVIIVEGRA…DIDYIARAPP (77 aa)). Glu-178, Asp-222, and Asp-224 together coordinate Mg(2+). A disordered region spans residues 289–320 (KKQIEQAQVQPSAAPTSPQPQPESTQPTQPIQ). The span at 294–320 (QAQVQPSAAPTSPQPQPESTQPTQPIQ) shows a compositional bias: low complexity.

It belongs to the archaeal DnaG primase family. Forms a ternary complex with MCM helicase and DNA. Component of the archaeal exosome complex. The cofactor is Mg(2+).

The enzyme catalyses ssDNA + n NTP = ssDNA/pppN(pN)n-1 hybrid + (n-1) diphosphate.. RNA polymerase that catalyzes the synthesis of short RNA molecules used as primers for DNA polymerase during DNA replication. Also part of the exosome, which is a complex involved in RNA degradation. Acts as a poly(A)-binding protein that enhances the interaction between heteromeric, adenine-rich transcripts and the exosome. This is DNA primase DnaG from Caldivirga maquilingensis (strain ATCC 700844 / DSM 13496 / JCM 10307 / IC-167).